The following is a 428-amino-acid chain: Homocitrate synthase, cytosolic isozyme (428 aa).

In terms of domain architecture, Pyruvate carboxyltransferase spans 23–276; that stretch reads FQLIDSTLRE…KSKYKLHKIR (254 aa). Arg-31 is a binding site for 2-oxoglutarate. Glu-32 contributes to the Mg(2+) binding site. Positions 91, 151, and 185 each coordinate 2-oxoglutarate. Positions 212 and 214 each coordinate Mg(2+). Residue His-309 is the Proton acceptor of the active site. Ser-385 is subject to Phosphoserine. Thr-396 bears the Phosphothreonine mark. A disordered region spans residues 399–428; the sequence is VLSAKKNKKNDSDVPELATIPAAKRTKPSA. Ser-401 and Ser-410 each carry phosphoserine.

The protein belongs to the alpha-IPM synthase/homocitrate synthase family. Homocitrate synthase LYS20/LYS21 subfamily. Mg(2+) serves as cofactor. Mn(2+) is required as a cofactor.

It is found in the cytoplasm. It carries out the reaction acetyl-CoA + 2-oxoglutarate + H2O = (2R)-homocitrate + CoA + H(+). Its pathway is amino-acid biosynthesis; L-lysine biosynthesis via AAA pathway; L-alpha-aminoadipate from 2-oxoglutarate: step 1/5. In terms of biological role, catalyzes the aldol-type condensation of 2-oxoglutarate with acetyl-CoA to yield homocitrate. Carries out the first step of the alpha-aminoadipate (AAA) lysine biosynthesis pathway. This is Homocitrate synthase, cytosolic isozyme (LYS20) from Saccharomyces cerevisiae (strain ATCC 204508 / S288c) (Baker's yeast).